The chain runs to 230 residues: Large ribosomal subunit protein uL3 (230 aa).

Disordered regions lie at residues Q125 to D149 and P210 to E230.

This sequence belongs to the universal ribosomal protein uL3 family. In terms of assembly, part of the 50S ribosomal subunit. Forms a cluster with proteins L14 and L19.

One of the primary rRNA binding proteins, it binds directly near the 3'-end of the 23S rRNA, where it nucleates assembly of the 50S subunit. This Mesomycoplasma hyopneumoniae (strain 232) (Mycoplasma hyopneumoniae) protein is Large ribosomal subunit protein uL3.